A 115-amino-acid polypeptide reads, in one-letter code: Probable 4-amino-4-deoxy-L-arabinose-phosphoundecaprenol flippase subunit ArnE (115 aa).

Transmembrane regions (helical) follow at residues 42–62, 65–85, and 93–112; these read PWPWLALLALGLGLACWLLLL, VEVGSAYPMLALNFVLVTLVA, and VDRRHLAGLLLIVAGVALLG. The EamA domain occupies 46 to 113; that stretch reads LALLALGLGL…IVAGVALLGR (68 aa).

Belongs to the ArnE family. Heterodimer of ArnE and ArnF.

It localises to the cell inner membrane. It participates in bacterial outer membrane biogenesis; lipopolysaccharide biosynthesis. In terms of biological role, translocates 4-amino-4-deoxy-L-arabinose-phosphoundecaprenol (alpha-L-Ara4N-phosphoundecaprenol) from the cytoplasmic to the periplasmic side of the inner membrane. The protein is Probable 4-amino-4-deoxy-L-arabinose-phosphoundecaprenol flippase subunit ArnE of Pseudomonas paraeruginosa (strain DSM 24068 / PA7) (Pseudomonas aeruginosa (strain PA7)).